The sequence spans 348 residues: UPF0324 membrane protein BH02290 (348 aa).

The next 11 helical transmembrane spans lie at 13 to 35 (AFLN…AYGL), 45 to 67 (QAWL…CFTL), 74 to 96 (GITF…SISV), 106 to 128 (LLAS…GRLF), 135 to 157 (AMLV…APVI), 167 to 189 (SIAF…HPFL), 196 to 218 (YGVL…ASVS), 223 to 245 (QIAT…ALSI), 257 to 275 (LHTL…MLIR), 285 to 307 (LIPI…GLGV), and 319 to 341 (VILA…IQLN).

It belongs to the UPF0324 family.

It localises to the cell membrane. This Bartonella henselae (strain ATCC 49882 / DSM 28221 / CCUG 30454 / Houston 1) (Rochalimaea henselae) protein is UPF0324 membrane protein BH02290.